Consider the following 349-residue polypeptide: Ion-translocating oxidoreductase complex subunit D (349 aa).

A run of 3 helical transmembrane segments spans residues 20 to 42 (VMQRVILCLLPGLVVQCAFFGWG), 77 to 99 (SAMLTAILIGVAIPPLAPWWMIV), and 124 to 144 (AMAAYVLLLVSFPVQMTTWIA). Threonine 185 carries the FMN phosphoryl threonine modification. The next 5 helical transmembrane spans lie at 212-232 (STGVGWFWVNLAYLAGGLVLL), 239-259 (WHISTGVLLGLFVASSIGFLL), 265-285 (ASPLMHLFSGATMLAAFFIAT), 291-311 (ATSPRGRIIFGALIGVLVYII), and 315-335 (GGYPDAFAFAVLLANLCAPFI).

Belongs to the NqrB/RnfD family. In terms of assembly, the complex is composed of six subunits: RnfA, RnfB, RnfC, RnfD, RnfE and RnfG. The cofactor is FMN.

Its subcellular location is the cell inner membrane. Its function is as follows. Part of a membrane-bound complex that couples electron transfer with translocation of ions across the membrane. The chain is Ion-translocating oxidoreductase complex subunit D from Shewanella baltica (strain OS195).